Consider the following 233-residue polypeptide: Biosynthetic peptidoglycan transglycosylase (233 aa).

The helical transmembrane segment at 7–27 (VFTWLAKLVLGLFFASILSVV) threads the bilayer.

This sequence belongs to the glycosyltransferase 51 family.

Its subcellular location is the cell inner membrane. The enzyme catalyses [GlcNAc-(1-&gt;4)-Mur2Ac(oyl-L-Ala-gamma-D-Glu-L-Lys-D-Ala-D-Ala)](n)-di-trans,octa-cis-undecaprenyl diphosphate + beta-D-GlcNAc-(1-&gt;4)-Mur2Ac(oyl-L-Ala-gamma-D-Glu-L-Lys-D-Ala-D-Ala)-di-trans,octa-cis-undecaprenyl diphosphate = [GlcNAc-(1-&gt;4)-Mur2Ac(oyl-L-Ala-gamma-D-Glu-L-Lys-D-Ala-D-Ala)](n+1)-di-trans,octa-cis-undecaprenyl diphosphate + di-trans,octa-cis-undecaprenyl diphosphate + H(+). Its pathway is cell wall biogenesis; peptidoglycan biosynthesis. Its function is as follows. Peptidoglycan polymerase that catalyzes glycan chain elongation from lipid-linked precursors. This Shewanella oneidensis (strain ATCC 700550 / JCM 31522 / CIP 106686 / LMG 19005 / NCIMB 14063 / MR-1) protein is Biosynthetic peptidoglycan transglycosylase.